The following is a 423-amino-acid chain: Serine hydroxymethyltransferase (423 aa).

(6S)-5,6,7,8-tetrahydrofolate-binding positions include Leu120 and 124–126 (GHL). The residue at position 229 (Lys229) is an N6-(pyridoxal phosphate)lysine. Position 353–355 (353–355 (SPF)) interacts with (6S)-5,6,7,8-tetrahydrofolate.

It belongs to the SHMT family. In terms of assembly, homodimer. The cofactor is pyridoxal 5'-phosphate.

It is found in the cytoplasm. It catalyses the reaction (6R)-5,10-methylene-5,6,7,8-tetrahydrofolate + glycine + H2O = (6S)-5,6,7,8-tetrahydrofolate + L-serine. It participates in one-carbon metabolism; tetrahydrofolate interconversion. It functions in the pathway amino-acid biosynthesis; glycine biosynthesis; glycine from L-serine: step 1/1. In terms of biological role, catalyzes the reversible interconversion of serine and glycine with tetrahydrofolate (THF) serving as the one-carbon carrier. This reaction serves as the major source of one-carbon groups required for the biosynthesis of purines, thymidylate, methionine, and other important biomolecules. Also exhibits THF-independent aldolase activity toward beta-hydroxyamino acids, producing glycine and aldehydes, via a retro-aldol mechanism. The chain is Serine hydroxymethyltransferase from Prochlorococcus marinus subsp. pastoris (strain CCMP1986 / NIES-2087 / MED4).